The primary structure comprises 186 residues: MQAINLTDHFLIAMPRLEDSFFAKTLTYICEHNEQGALGLVVNRSTDLSVEKLLTQLGMSPQDPALSNLPVLLGGPVQVDNGFVLHEPVGAWRFTLSSNVVTGLTASIDILQAVADCQGPEKILVALGYSGWAAGQLEQELAQNAWLTVPAQSRILFELSFEERLPAAMKLLGIDFFNLSNEVGHA.

This sequence belongs to the UPF0301 (AlgH) family.

The protein is UPF0301 protein Neut_0448 of Nitrosomonas eutropha (strain DSM 101675 / C91 / Nm57).